The sequence spans 799 residues: Protein-lysine N-methyltransferase SMYD4 (799 aa).

112–114 (RSA) serves as a coordination point for S-adenosyl-L-methionine. The 338-residue stretch at 233–570 (LSVSLCTHPL…KGQEILHCYG (338 aa)) folds into the SET domain. The Zn(2+) site is built by C296, C299, C309, C312, C318, C322, H331, and C335. An MYND-type zinc finger spans residues 296–335 (CHRCLKHTLATVPCGSCSYAKYCSQECMQQAWDLYHSTEC). S-adenosyl-L-methionine is bound by residues 535–536 (NH), Y569, and F591.

The protein belongs to the class V-like SAM-binding methyltransferase superfamily. As to quaternary structure, interacts (via MYND-type zinc finger) with HDAC1.

Its subcellular location is the nucleus. It localises to the cytoplasm. It catalyses the reaction L-lysyl-[protein] + S-adenosyl-L-methionine = N(6)-methyl-L-lysyl-[protein] + S-adenosyl-L-homocysteine + H(+). Protein-lysine N-methyltransferase. Monomethylates PRMT5, modulating its transcriptional activity. May also act as a histone methyltransferase. Plays a critical role in cardiac development. Acts as a key epigenetic regulator of gene expression during cardiac development via its dual activities as a methyltransferase and negative regulator of HDAC1. This is Protein-lysine N-methyltransferase SMYD4 (Smyd4) from Mus musculus (Mouse).